The chain runs to 1047 residues: Atrial natriuretic peptide receptor 2 (1047 aa).

Residues 1-16 (MALPSLLLVVAALAGG) form the signal peptide. The Extracellular segment spans residues 17–458 (VRPPGARNLT…DKTPLSTLAI (442 aa)). N-linked (GlcNAc...) asparagine glycosylation is found at asparagine 24 and asparagine 35. Cysteine 75 and cysteine 101 are oxidised to a cystine. Residues asparagine 161, asparagine 195, asparagine 244, asparagine 277, and asparagine 349 are each glycosylated (N-linked (GlcNAc...) asparagine). Residues 459-478 (VALGTGITFIMFGVSSFLIF) traverse the membrane as a helical segment. Topologically, residues 479–1047 (RKLMLEKELA…GERKGPPGLL (569 aa)) are cytoplasmic. Serine 513 bears the Phosphoserine mark. The region spanning 513 to 786 (SRLTLSLRGS…PDFGQIKGFI (274 aa)) is the Protein kinase domain. Position 516 is a phosphothreonine (threonine 516). Serine 518, serine 522, serine 523, and serine 526 each carry phosphoserine. Threonine 529 bears the Phosphothreonine mark. The Guanylate cyclase domain occupies 861 to 991 (TIYFSDIVGF…DTVNTASRME (131 aa)).

Belongs to the adenylyl cyclase class-4/guanylyl cyclase family. Phosphorylated. Phosphorylation of the protein kinase-like domain is required for full activation by CNP. In terms of processing, glycosylated.

It localises to the cell membrane. The catalysed reaction is GTP = 3',5'-cyclic GMP + diphosphate. Receptor for the C-type natriuretic peptide NPPC/CNP hormone. Has guanylate cyclase activity upon binding of its ligand. May play a role in the regulation of skeletal growth. This Rattus norvegicus (Rat) protein is Atrial natriuretic peptide receptor 2 (Npr2).